A 281-amino-acid chain; its full sequence is Ribosomal protein L11 methyltransferase (281 aa).

S-adenosyl-L-methionine-binding residues include Thr133, Gly154, Asp175, and Asn216.

This sequence belongs to the methyltransferase superfamily. PrmA family.

It is found in the cytoplasm. The catalysed reaction is L-lysyl-[protein] + 3 S-adenosyl-L-methionine = N(6),N(6),N(6)-trimethyl-L-lysyl-[protein] + 3 S-adenosyl-L-homocysteine + 3 H(+). Functionally, methylates ribosomal protein L11. The protein is Ribosomal protein L11 methyltransferase of Campylobacter jejuni subsp. jejuni serotype O:6 (strain 81116 / NCTC 11828).